Here is a 493-residue protein sequence, read N- to C-terminus: 3-octaprenyl-4-hydroxybenzoate carboxy-lyase (493 aa).

Asn-172 is a binding site for Mn(2+). Prenylated FMN-binding positions include 175-177 (IYR), 189-191 (RWL), and 194-195 (RG). Glu-238 is a Mn(2+) binding site. The active-site Proton donor is Asp-287.

It belongs to the UbiD family. Homohexamer. It depends on prenylated FMN as a cofactor. The cofactor is Mn(2+).

The protein localises to the cell membrane. It catalyses the reaction a 4-hydroxy-3-(all-trans-polyprenyl)benzoate + H(+) = a 2-(all-trans-polyprenyl)phenol + CO2. It functions in the pathway cofactor biosynthesis; ubiquinone biosynthesis. Its function is as follows. Catalyzes the decarboxylation of 3-octaprenyl-4-hydroxy benzoate to 2-octaprenylphenol, an intermediate step in ubiquinone biosynthesis. This chain is 3-octaprenyl-4-hydroxybenzoate carboxy-lyase, found in Shewanella baltica (strain OS195).